Here is a 299-residue protein sequence, read N- to C-terminus: GTPase Era (299 aa).

The Era-type G domain maps to Arg5 to Pro175. Residues Gly13–Ser20 are G1. Gly13 to Ser20 contacts GTP. The tract at residues Gln39–His43 is G2. Residues Asp60 to Gly63 are G3. GTP is bound by residues Asp60–Leu64 and Thr124–Asp127. A G4 region spans residues Thr124–Asp127. The interval Val154 to Ala156 is G5. Positions Val206 to Lys285 constitute a KH type-2 domain.

It belongs to the TRAFAC class TrmE-Era-EngA-EngB-Septin-like GTPase superfamily. Era GTPase family. Monomer. Stays in the monomer conformation, irrespective of the presence of GTP.

It localises to the cell envelope. The protein resides in the secreted. The protein localises to the cell wall. With respect to regulation, co-purified with RNA upon overexpression in E.coli, but RNAs do not appear to influence the GTPase activity. Functionally, exhibits GTPase activity. Binds RNA but is probably not involved in ribosome assembly in mycobacteria. Cannot use ATP. The chain is GTPase Era from Mycolicibacterium smegmatis (strain ATCC 700084 / mc(2)155) (Mycobacterium smegmatis).